The primary structure comprises 170 residues: Probable deoxyuridine 5'-triphosphate nucleotidohydrolase (170 aa).

Belongs to the dCTP deaminase family. Archaeal dUTPase subfamily.

It catalyses the reaction dUTP + H2O = dUMP + diphosphate + H(+). The protein operates within pyrimidine metabolism; dUMP biosynthesis; dUMP from dCTP (dUTP route): step 2/2. Its function is as follows. This enzyme is involved in nucleotide metabolism: it produces dUMP, the immediate precursor of thymidine nucleotides and it decreases the intracellular concentration of dUTP so that uracil cannot be incorporated into DNA. This is Probable deoxyuridine 5'-triphosphate nucleotidohydrolase from Methanococcoides burtonii (strain DSM 6242 / NBRC 107633 / OCM 468 / ACE-M).